The sequence spans 210 residues: NAD(P)H-quinone oxidoreductase subunit I (210 aa).

4Fe-4S ferredoxin-type domains are found at residues 55 to 84 and 95 to 124; these read GRIH…VDWV and RNYS…MTEE. Residues Cys-64, Cys-67, Cys-70, Cys-74, Cys-104, Cys-107, Cys-110, and Cys-114 each contribute to the [4Fe-4S] cluster site.

This sequence belongs to the complex I 23 kDa subunit family. As to quaternary structure, NDH-1 is composed of at least 11 different subunits. Requires [4Fe-4S] cluster as cofactor.

The protein resides in the cellular thylakoid membrane. The enzyme catalyses a plastoquinone + NADH + (n+1) H(+)(in) = a plastoquinol + NAD(+) + n H(+)(out). It carries out the reaction a plastoquinone + NADPH + (n+1) H(+)(in) = a plastoquinol + NADP(+) + n H(+)(out). Its function is as follows. NDH-1 shuttles electrons from an unknown electron donor, via FMN and iron-sulfur (Fe-S) centers, to quinones in the respiratory and/or the photosynthetic chain. The immediate electron acceptor for the enzyme in this species is believed to be plastoquinone. Couples the redox reaction to proton translocation, and thus conserves the redox energy in a proton gradient. The chain is NAD(P)H-quinone oxidoreductase subunit I from Synechococcus sp. (strain CC9902).